A 290-amino-acid chain; its full sequence is Pyridoxal kinase PdxY (290 aa).

Substrate is bound by residues serine 12 and 47–48 (TQ). Residues aspartate 114, glutamate 151, lysine 184, and 211-214 (RPLL) contribute to the ATP site. A substrate-binding site is contributed by aspartate 225.

Belongs to the pyridoxine kinase family. PdxY subfamily. In terms of assembly, homodimer. It depends on Mg(2+) as a cofactor.

It carries out the reaction pyridoxal + ATP = pyridoxal 5'-phosphate + ADP + H(+). It participates in cofactor metabolism; pyridoxal 5'-phosphate salvage; pyridoxal 5'-phosphate from pyridoxal: step 1/1. Functionally, pyridoxal kinase involved in the salvage pathway of pyridoxal 5'-phosphate (PLP). Catalyzes the phosphorylation of pyridoxal to PLP. This chain is Pyridoxal kinase PdxY, found in Pseudomonas putida (strain ATCC 47054 / DSM 6125 / CFBP 8728 / NCIMB 11950 / KT2440).